Reading from the N-terminus, the 360-residue chain is Phospho-N-acetylmuramoyl-pentapeptide-transferase (360 aa).

The next 10 helical transmembrane spans lie at G27–L47, V69–M89, W93–F113, L134–A154, V168–A188, G199–V219, I239–P259, A262–I282, L288–V308, and T337–L357.

This sequence belongs to the glycosyltransferase 4 family. MraY subfamily. The cofactor is Mg(2+).

Its subcellular location is the cell inner membrane. It carries out the reaction UDP-N-acetyl-alpha-D-muramoyl-L-alanyl-gamma-D-glutamyl-meso-2,6-diaminopimeloyl-D-alanyl-D-alanine + di-trans,octa-cis-undecaprenyl phosphate = di-trans,octa-cis-undecaprenyl diphospho-N-acetyl-alpha-D-muramoyl-L-alanyl-D-glutamyl-meso-2,6-diaminopimeloyl-D-alanyl-D-alanine + UMP. Its pathway is cell wall biogenesis; peptidoglycan biosynthesis. Its function is as follows. Catalyzes the initial step of the lipid cycle reactions in the biosynthesis of the cell wall peptidoglycan: transfers peptidoglycan precursor phospho-MurNAc-pentapeptide from UDP-MurNAc-pentapeptide onto the lipid carrier undecaprenyl phosphate, yielding undecaprenyl-pyrophosphoryl-MurNAc-pentapeptide, known as lipid I. The sequence is that of Phospho-N-acetylmuramoyl-pentapeptide-transferase from Ruegeria sp. (strain TM1040) (Silicibacter sp.).